Consider the following 101-residue polypeptide: Signal recognition particle 19 kDa protein (101 aa).

Belongs to the SRP19 family. Part of the signal recognition particle protein translocation system, which is composed of SRP and FtsY. Archaeal SRP consists of a 7S RNA molecule of 300 nucleotides and two protein subunits: SRP54 and SRP19.

The protein localises to the cytoplasm. Functionally, involved in targeting and insertion of nascent membrane proteins into the cytoplasmic membrane. Binds directly to 7S RNA and mediates binding of the 54 kDa subunit of the SRP. The sequence is that of Signal recognition particle 19 kDa protein from Methanosarcina barkeri (strain Fusaro / DSM 804).